The primary structure comprises 305 residues: Spermatogenesis-associated protein 4 (305 aa).

In terms of domain architecture, Calponin-homology (CH) spans 49–155 (SRLSRSVLRW…EEVYTLLTHR (107 aa)).

As to expression, highly expressed in testis, the expression is observed precisely in seminiferous tubules.

Its subcellular location is the nucleus. May play a role in apoptosis regulation. In Homo sapiens (Human), this protein is Spermatogenesis-associated protein 4 (SPATA4).